A 182-amino-acid polypeptide reads, in one-letter code: Adenine phosphoribosyltransferase (182 aa).

This sequence belongs to the purine/pyrimidine phosphoribosyltransferase family. In terms of assembly, homodimer.

Its subcellular location is the cytoplasm. The enzyme catalyses AMP + diphosphate = 5-phospho-alpha-D-ribose 1-diphosphate + adenine. It participates in purine metabolism; AMP biosynthesis via salvage pathway; AMP from adenine: step 1/1. Catalyzes a salvage reaction resulting in the formation of AMP, that is energically less costly than de novo synthesis. The chain is Adenine phosphoribosyltransferase from Pseudomonas entomophila (strain L48).